A 199-amino-acid chain; its full sequence is dTTP/UTP pyrophosphatase (199 aa).

Asp79 functions as the Proton acceptor in the catalytic mechanism.

The protein belongs to the Maf family. YhdE subfamily. It depends on a divalent metal cation as a cofactor.

The protein localises to the cytoplasm. The catalysed reaction is dTTP + H2O = dTMP + diphosphate + H(+). It catalyses the reaction UTP + H2O = UMP + diphosphate + H(+). Nucleoside triphosphate pyrophosphatase that hydrolyzes dTTP and UTP. May have a dual role in cell division arrest and in preventing the incorporation of modified nucleotides into cellular nucleic acids. In Porphyromonas gingivalis (strain ATCC 33277 / DSM 20709 / CIP 103683 / JCM 12257 / NCTC 11834 / 2561), this protein is dTTP/UTP pyrophosphatase.